Here is a 132-residue protein sequence, read N- to C-terminus: Small ribosomal subunit protein uS19 (132 aa).

The protein belongs to the universal ribosomal protein uS19 family.

Its function is as follows. Protein S19 forms a complex with S13 that binds strongly to the 16S ribosomal RNA. In Korarchaeum cryptofilum (strain OPF8), this protein is Small ribosomal subunit protein uS19.